The sequence spans 685 residues: Sodium/glucose cotransporter 4 (685 aa).

The disordered stretch occupies residues 1-20 (MNTELVAMEPGVSRNGVRTE). At 1–32 (MNTELVAMEPGVSRNGVRTETTTNPSLGLHTY) the chain is on the extracellular side. A helical membrane pass occupies residues 33–53 (DIVVVVIYFVFVLAVGIWSSI). At 54-71 (RASRGTVGGYFLAGRSMT) the chain is on the cytoplasmic side. A helical membrane pass occupies residues 72 to 94 (WWPIGASLMSSNVGSGLFIGLAG). Residues 95 to 110 (TGAAGGLAVGGFEWNA) lie on the Extracellular side of the membrane. Residues 111–131 (TFLLLALGWIFVPVYIAAGVV) form a helical membrane-spanning segment. Residues 132–153 (TMPQYLKKRFGGQRIQVYMSVL) are Cytoplasmic-facing. The helical transmembrane segment at 154 to 174 (SLILYIFTKISTDIFSGALFI) threads the bilayer. Residues 175-186 (QMALGWNLYLST) are Extracellular-facing. Residues 187–207 (VILLVVTAVYTIAGGLTAVIY) traverse the membrane as a helical segment. The Cytoplasmic portion of the chain corresponds to 208–213 (TDALQT). The chain crosses the membrane as a helical span at residues 214 to 234 (VIMVGGALVLMFLGFQEVGWY). Topologically, residues 235-271 (PGLQQLYRQAIPNTTVPNTTCHLPRPDAFHMLRDPVN) are extracellular. Asn-247 carries N-linked (GlcNAc...) asparagine glycosylation. The chain crosses the membrane as a helical span at residues 272 to 292 (GDIPWPGLIFGLTVLATWCWC). At 293 to 313 (TDQVIVQRSLAAKNLSHAKGG) the chain is on the cytoplasmic side. Residues 314–334 (SVLGGYLKILPMFFIVMPGMI) form a helical membrane-spanning segment. Residues 335 to 379 (SRALYPDEVACVDPDICQRVCGARVGCSNIAYPKLVMALMPVGLR) lie on the Extracellular side of the membrane. A helical membrane pass occupies residues 380–402 (GLMIAVIMAALMSSLTSIFNSSS). Residues 403 to 423 (TLFAIDVWQRFRRQASEQELM) are Cytoplasmic-facing. The helical transmembrane segment at 424 to 444 (VVGRLFVVFLVVISILWIPII) threads the bilayer. The Extracellular portion of the chain corresponds to 445-455 (QSSNSGQLFDY). A helical transmembrane segment spans residues 456-476 (IQSITSYLAPPITALFLLAIF). Over 477–483 (CKRVNEP) the chain is Cytoplasmic. The helical transmembrane segment at 484-504 (GAFWGLMFGLVVGILRMILEF) threads the bilayer. Residues 505 to 526 (SYSAPACGEMDRRPAVLKDFHY) lie on the Extracellular side of the membrane. Residues 527–547 (LYFALLLCGLTAIIIVVISFF) traverse the membrane as a helical segment. The Cytoplasmic segment spans residues 548 to 664 (TEPIPDDKLA…SIEEEPLWRR (117 aa)). The tract at residues 577–616 (VSVNNTEDDNSPGLAGRPVVEGPAGDEEEANTTQGPEQPG) is disordered. Residues 665-685 (VCNINAIILLAINIFLWGYFA) form a helical membrane-spanning segment.

It belongs to the sodium:solute symporter (SSF) (TC 2.A.21) family.

The protein localises to the cell membrane. It carries out the reaction D-mannose(out) + n Na(+)(out) = D-mannose(in) + n Na(+)(in). Its function is as follows. Electrogenic Na(+)-coupled sugar symporter that may play a primary role in D-mannose and possibly D-fructose and D-glucose transport at the plasma membrane. Transporter activity is driven by a transmembrane Na(+) electrochemical gradient set by the Na(+)/K(+) pump. Exclusively recognizes sugar substrates having a pyranose ring with an axial hydroxyl group on carbon 2. The chain is Sodium/glucose cotransporter 4 (Slc5a9) from Mus musculus (Mouse).